The primary structure comprises 106 residues: UPF0145 protein BH0643 (106 aa).

It belongs to the UPF0145 family.

In Halalkalibacterium halodurans (strain ATCC BAA-125 / DSM 18197 / FERM 7344 / JCM 9153 / C-125) (Bacillus halodurans), this protein is UPF0145 protein BH0643.